A 283-amino-acid polypeptide reads, in one-letter code: Polyamine aminopropyltransferase (283 aa).

A PABS domain is found at 2 to 237 (ELWYTEEHTD…GHWLFGFASK (236 aa)). Residue Gln31 participates in S-methyl-5'-thioadenosine binding. 2 residues coordinate spermidine: His62 and Asp86. S-methyl-5'-thioadenosine contacts are provided by residues Glu106 and 137-138 (DG). Asp155 (proton acceptor) is an active-site residue. Residue 155 to 158 (DSTD) participates in spermidine binding. S-methyl-5'-thioadenosine is bound at residue Pro162.

It belongs to the spermidine/spermine synthase family. In terms of assembly, homodimer or homotetramer.

It is found in the cytoplasm. It carries out the reaction S-adenosyl 3-(methylsulfanyl)propylamine + putrescine = S-methyl-5'-thioadenosine + spermidine + H(+). It functions in the pathway amine and polyamine biosynthesis; spermidine biosynthesis; spermidine from putrescine: step 1/1. Functionally, catalyzes the irreversible transfer of a propylamine group from the amino donor S-adenosylmethioninamine (decarboxy-AdoMet) to putrescine (1,4-diaminobutane) to yield spermidine. This chain is Polyamine aminopropyltransferase, found in Clostridium perfringens (strain ATCC 13124 / DSM 756 / JCM 1290 / NCIMB 6125 / NCTC 8237 / Type A).